We begin with the raw amino-acid sequence, 449 residues long: UMP-CMP kinase 2, mitochondrial (449 aa).

A mitochondrion-targeting transit peptide spans 1–98 (MAFARRLLRG…VRAARLHQRL (98 aa)). 259-266 (GLDATGKT) is a binding site for ATP. Residues 380–412 (EERLQRLQGRGMEKTREEAELEANSVFRQKVEM) adopt a coiled-coil conformation.

It belongs to the thymidylate kinase family. High levels are observed in myeloid, lymphoid and mesenchymal tissues.

Its subcellular location is the mitochondrion. It catalyses the reaction CMP + ATP = CDP + ADP. The enzyme catalyses dCMP + ATP = dCDP + ADP. The catalysed reaction is a 2'-deoxyribonucleoside 5'-diphosphate + ATP = a 2'-deoxyribonucleoside 5'-triphosphate + ADP. It carries out the reaction a ribonucleoside 5'-diphosphate + ATP = a ribonucleoside 5'-triphosphate + ADP. Mitochondrial nucleotide monophosphate kinase needed for salvage dNTP synthesis that mediates immunomodulatory and antiviral activities through IFN-dependent and IFN-independent pathways. Restricts the replication of multiple viruses including flaviviruses or coronaviruses. Together with viperin/RSAD2 and ddhCTP, suppresses the replication of several coronaviruses through inhibition of the viral RNA-dependent RNA polymerase activities. Concerning flaviviruses, restricts RNA translation when localized to the mitochondria independently of its kinase activity. Is able to phosphorylate dUMP, dCMP, CMP, UMP and monophosphates of the pyrimidine nucleoside analogs ddC, dFdC, araC, BVDU and FdUrd with ATP as phosphate donor. Efficacy is highest for dUMP followed by dCMP while CMP and UMP are poor substrates. Controls therefore mitochondrial DNA synthesis by supplying required deoxyribonucleotides. CMPK2-dependent mitochondrial DNA synthesis is necessary for the production of oxidized mitochondrial DNA fragments after exposure to NLRP3 activators. In turn, cytosolic oxidized mtDNA associates with the NLRP3 inflammasome complex and is required for its activation. This chain is UMP-CMP kinase 2, mitochondrial (CMPK2), found in Homo sapiens (Human).